The primary structure comprises 410 residues: D-3-phosphoglycerate dehydrogenase (410 aa).

Residues 162-163, aspartate 182, 239-241, and aspartate 265 contribute to the NAD(+) site; these read HI and AAR. Arginine 241 is a catalytic residue. Glutamate 270 is a catalytic residue. The active-site Proton donor is histidine 293. Position 293–296 (293–296) interacts with NAD(+); that stretch reads HIGG. One can recognise an ACT domain in the interval 341-410; it reads RLLHIHENRP…DGTIRARVLY (70 aa).

The protein belongs to the D-isomer specific 2-hydroxyacid dehydrogenase family.

It catalyses the reaction (2R)-3-phosphoglycerate + NAD(+) = 3-phosphooxypyruvate + NADH + H(+). The catalysed reaction is (R)-2-hydroxyglutarate + NAD(+) = 2-oxoglutarate + NADH + H(+). Its pathway is amino-acid biosynthesis; L-serine biosynthesis; L-serine from 3-phospho-D-glycerate: step 1/3. Its activity is regulated as follows. In bacteria displays feedback inhibition by L-serine. In terms of biological role, catalyzes the reversible oxidation of 3-phospho-D-glycerate to 3-phosphonooxypyruvate, the first step of the phosphorylated L-serine biosynthesis pathway. Also catalyzes the reversible oxidation of 2-hydroxyglutarate to 2-oxoglutarate. This is D-3-phosphoglycerate dehydrogenase (serA) from Haemophilus influenzae (strain ATCC 51907 / DSM 11121 / KW20 / Rd).